The chain runs to 238 residues: Mannose-binding protein A (238 aa).

Positions 1–17 are cleaved as a signal peptide; it reads MLLLPLLVLLCVVSVSS. Over residues 38–49 the composition is skewed to basic and acidic residues; it reads DGRDGPKGEKGE. Positions 38 to 87 are disordered; that stretch reads DGRDGPKGEKGEPGQGLRGLQGPPGKLGPPGSVGAPGSQGPKGQKGDRGD. Residues 39-88 form the Collagen-like domain; sequence GRDGPKGEKGEPGQGLRGLQGPPGKLGPPGSVGAPGSQGPKGQKGDRGDS. P43 carries the post-translational modification 4-hydroxyproline. K44 and K47 each carry 5-hydroxylysine. O-linked (Gal...) hydroxylysine glycosylation is found at K44 and K47. 4-hydroxyproline occurs at positions 50, 61, 67, 73, and 78. 5-hydroxylysine is present on residues K79 and K82. K79 and K82 each carry an O-linked (Gal...) hydroxylysine glycan. The C-type lectin domain occupies 143–238; sequence ALCSELRGTV…SHTAVCEFPA (96 aa). Intrachain disulfides connect C145/C234 and C212/C226. Positions 178, 182, 202, 204, 205, 210, 211, 222, and 223 each coordinate Ca(2+). The tract at residues 202-210 is calcium-dependent carbohydrate binding; sequence EPNDHGSGE.

As to quaternary structure, homotrimer. Forms higher oligomeric complexes formed by the association of two, three or more homotrimers. Oligomerization occurs in the endoplasmic reticulum. Interacts with MASP1 and MASP2. In terms of processing, hydroxylated on lysine and proline residues within the collagen-like domain. Post-translationally, O-glycosylated. O-linked glycans on hydroxylysine residues consist of Glc-Gal disaccharides bound to the oxygen atom of post-translationally added hydroxyl groups. In terms of tissue distribution, detected in blood serum (at protein level).

The protein resides in the secreted. Calcium-dependent lectin. Plays a role in the innate immune response by binding mannose, fucose and N-acetylglucosamine moieties on different microorganisms and mediating activation of the lectin complement pathway. Binds to late apoptotic cells, as well as to apoptotic blebs and to necrotic cells, but not to early apoptotic cells, facilitating their uptake by macrophages. This chain is Mannose-binding protein A (Mbl1), found in Rattus norvegicus (Rat).